A 74-amino-acid chain; its full sequence is Antimicrobial peptide 36.4 (74 aa).

The N-terminal stretch at 1-22 (MKVNVLLAVFLVVMVVTDHCHA) is a signal peptide. K39 is subject to Lysine amide. The propeptide occupies 44-74 (LQMEARFQPQNKNYRKRELDLENLFTHMPDY).

Belongs to the non-disulfide-bridged peptide (NDBP) superfamily. Short antimicrobial peptide (group 4) family. As to expression, expressed by the venom gland.

The protein localises to the secreted. It is found in the target cell membrane. Cationic host defense peptide that have antibacterial activity by breaking membranes. Is more effective on Gram-positive than on Gram-negative bacteria. The protein is Antimicrobial peptide 36.4 of Lychas mucronatus (Chinese swimming scorpion).